The chain runs to 140 residues: Nucleoside diphosphate kinase (140 aa).

Positions 11, 59, 87, 93, 104, and 114 each coordinate ATP. H117 functions as the Pros-phosphohistidine intermediate in the catalytic mechanism.

The protein belongs to the NDK family. Homotetramer. Requires Mg(2+) as cofactor.

Its subcellular location is the cytoplasm. The enzyme catalyses a 2'-deoxyribonucleoside 5'-diphosphate + ATP = a 2'-deoxyribonucleoside 5'-triphosphate + ADP. The catalysed reaction is a ribonucleoside 5'-diphosphate + ATP = a ribonucleoside 5'-triphosphate + ADP. Its function is as follows. Major role in the synthesis of nucleoside triphosphates other than ATP. The ATP gamma phosphate is transferred to the NDP beta phosphate via a ping-pong mechanism, using a phosphorylated active-site intermediate. The sequence is that of Nucleoside diphosphate kinase from Cereibacter sphaeroides (strain ATCC 17025 / ATH 2.4.3) (Rhodobacter sphaeroides).